We begin with the raw amino-acid sequence, 243 residues long: 1-(5-phosphoribosyl)-5-[(5-phosphoribosylamino)methylideneamino] imidazole-4-carboxamide isomerase (243 aa).

Catalysis depends on Asp-10, which acts as the Proton acceptor. The active-site Proton donor is Asp-128.

Belongs to the HisA/HisF family.

The protein resides in the cytoplasm. The catalysed reaction is 1-(5-phospho-beta-D-ribosyl)-5-[(5-phospho-beta-D-ribosylamino)methylideneamino]imidazole-4-carboxamide = 5-[(5-phospho-1-deoxy-D-ribulos-1-ylimino)methylamino]-1-(5-phospho-beta-D-ribosyl)imidazole-4-carboxamide. It participates in amino-acid biosynthesis; L-histidine biosynthesis; L-histidine from 5-phospho-alpha-D-ribose 1-diphosphate: step 4/9. The polypeptide is 1-(5-phosphoribosyl)-5-[(5-phosphoribosylamino)methylideneamino] imidazole-4-carboxamide isomerase (Helicobacter hepaticus (strain ATCC 51449 / 3B1)).